Reading from the N-terminus, the 640-residue chain is Autophagy-related protein 20 (640 aa).

Composition is skewed to polar residues over residues 1 to 18 (MSDL…SETR) and 126 to 153 (AETC…PSVS). 2 disordered regions span residues 1–63 (MSDL…NNKV) and 126–156 (AETC…SNRK). At Ser2 the chain carries N-acetylserine. The PX domain maps to 140–301 (MNGETSASEE…DFLDPNNHNW (162 aa)). 4 residues coordinate a 1,2-diacyl-sn-glycero-3-phospho-(1D-myo-inositol-3-phosphate): Arg192, Ser194, Lys218, and Arg267. A phosphoserine mark is found at Ser361 and Ser363. 2 coiled-coil regions span residues 475 to 512 (LQNE…DNEM) and 562 to 593 (TASI…KVIK).

Belongs to the sorting nexin family. Forms a complex with SNX4 and ATG17.

It localises to the endosome membrane. The protein localises to the preautophagosomal structure membrane. In terms of biological role, required for cytoplasm to vacuole transport (Cvt), pexophagy and mitophagy. Also involved in endoplasmic reticulum-specific autophagic process and is essential for the survival of cells subjected to severe ER stress. Functions in protein retrieval from the endocytic pathway. Required for proper sorting of the v-SNARE protein SNC1. In Saccharomyces cerevisiae (strain ATCC 204508 / S288c) (Baker's yeast), this protein is Autophagy-related protein 20 (ATG20).